The chain runs to 241 residues: Ribonuclease PH (241 aa).

Residues R89 and 127–129 (GTR) contribute to the phosphate site.

Belongs to the RNase PH family. In terms of assembly, homohexameric ring arranged as a trimer of dimers.

The catalysed reaction is tRNA(n+1) + phosphate = tRNA(n) + a ribonucleoside 5'-diphosphate. Its function is as follows. Phosphorolytic 3'-5' exoribonuclease that plays an important role in tRNA 3'-end maturation. Removes nucleotide residues following the 3'-CCA terminus of tRNAs; can also add nucleotides to the ends of RNA molecules by using nucleoside diphosphates as substrates, but this may not be physiologically important. Probably plays a role in initiation of 16S rRNA degradation (leading to ribosome degradation) during starvation. This is Ribonuclease PH from Xanthomonas euvesicatoria pv. vesicatoria (strain 85-10) (Xanthomonas campestris pv. vesicatoria).